The following is a 689-amino-acid chain: UvrABC system protein C (689 aa).

Polar residues predominate over residues 1 to 19 (MTSDSSDTAKQIGSGQPSG). The tract at residues 1–59 (MTSDSSDTAKQIGSGQPSGSPADMRRRDGVAPEQEVDPASLETDEDDEARLPDLPDEPV) is disordered. Residues 42 to 59 (ETDEDDEARLPDLPDEPV) show a composition bias toward acidic residues. Residues 83 to 161 (TSPGVYRMMN…IKQLRPRFNV (79 aa)) enclose the GIY-YIG domain. The UVR domain occupies 271-306 (RAVKEDLARAMEQAAADLAFERAALYRDRLAALSAI).

Belongs to the UvrC family. Interacts with UvrB in an incision complex.

It localises to the cytoplasm. In terms of biological role, the UvrABC repair system catalyzes the recognition and processing of DNA lesions. UvrC both incises the 5' and 3' sides of the lesion. The N-terminal half is responsible for the 3' incision and the C-terminal half is responsible for the 5' incision. The chain is UvrABC system protein C from Nitrobacter winogradskyi (strain ATCC 25391 / DSM 10237 / CIP 104748 / NCIMB 11846 / Nb-255).